Reading from the N-terminus, the 864-residue chain is MLFPYFPLSELDVSAVRTQKENLKQFELTQFAHYEIYDLITNRTQFCDHLLRDLWLRFGLVKDNTLTLIAVGGYGREEMFPLSDLDFLILTSEQVEAQTEQKIRQFVQFLWDCGFDVGHAVRTLSECEQAGRDNITVATNLLEARYLEGNFSQFQQLDNVLQKADFWPREAFFQAKYQERVERYQRYHNTSYNLEPDIKHSPGGLRDLHLLYWIALRHTGAKNLTDILNSGFIYPQEYAQLLESQQFLFKVRFALHLILKRYDNRLLFERQIRVAELLEFVGPGNQGVEKMMKSFFQALQTISLLSDLLVKHYREHFLQTNEPVQVRLLDKEFQCVNNAICLRQANLFVEQPEQILSLFFHLTQDHQLDIHSSTLRQLHLALEQRSGYLSELPVARERFLRLFNQPGAIARALVPMHKYGVLKAYLPQWHHIEGLMQFDLFHCYTVDEHIVRTLLKLEYFLEAESVVPHPICSQIFSRLTDRTLLYIAALFHDIAKGRGGDHAELGAVDVAQFAQQHGFDQREIHTLTWLVEQHLLMSVTAQRRDIHDPEVVLHFAEAVQNNVRLDYLTCLTVADICATNETLWNSWKRTLIATLYQFTTQQFAQGMDCLLDHAEKIENHRQQALTLLTQNSLLSAVQIEEIWQHCPEEYFLRNTPKQIAWHTELLADNQTELLVKISNRFSEGGTEIFVYCQDQPNLFHKVVTTIGAKKFSIHDAQIITSHDGYVFDSFIITELDGKLVKFDRRRSLEKALMQALNTSKLPTFRATDNPKLQHFHVKTEVRFLKEQRTDQTEMELFALDQTGLLAKVSQVFSELKLNLLNAKITTIGEKAEDFFILTNSEDRALTAEQRQCLTQRLHEVLEPK.

The interval 1–328 (MLFPYFPLSE…QTNEPVQVRL (328 aa)) is uridylyltransferase. Residues 329–686 (LDKEFQCVNN…ISNRFSEGGT (358 aa)) are uridylyl-removing. The HD domain occupies 446 to 562 (VDEHIVRTLL…LHFAEAVQNN (117 aa)). ACT domains are found at residues 687-766 (EIFV…TFRA) and 793-864 (EMEL…LEPK).

The protein belongs to the GlnD family. It depends on Mg(2+) as a cofactor.

It carries out the reaction [protein-PII]-L-tyrosine + UTP = [protein-PII]-uridylyl-L-tyrosine + diphosphate. It catalyses the reaction [protein-PII]-uridylyl-L-tyrosine + H2O = [protein-PII]-L-tyrosine + UMP + H(+). Uridylyltransferase (UTase) activity is inhibited by glutamine, while glutamine activates uridylyl-removing (UR) activity. Its function is as follows. Modifies, by uridylylation and deuridylylation, the PII regulatory proteins (GlnB and homologs), in response to the nitrogen status of the cell that GlnD senses through the glutamine level. Under low glutamine levels, catalyzes the conversion of the PII proteins and UTP to PII-UMP and PPi, while under higher glutamine levels, GlnD hydrolyzes PII-UMP to PII and UMP (deuridylylation). Thus, controls uridylylation state and activity of the PII proteins, and plays an important role in the regulation of nitrogen assimilation and metabolism. This is Bifunctional uridylyltransferase/uridylyl-removing enzyme from Pasteurella multocida (strain Pm70).